The following is a 407-amino-acid chain: Histone-lysine N-methyltransferase SUV39H2 (407 aa).

The 59-residue stretch at 43–101 folds into the Chromo domain; sequence YEVEYLCDYKVEEGKEYYLVKWKGWPESSNTWEPQKNLKCPKLLENFLSDKDEYLSRMK. The region spanning 185–243 is the Pre-SET domain; it reads TGCECSDCPAEKCCPKEAGFILAYNKQKKLKIQPGLPIYECNSFCRCGPDCPNRIVQKG. Residues Cys187, Cys189, Cys192, Cys197, Cys198, Cys225, Cys229, Cys231, and Cys235 each coordinate Zn(2+). The SET domain occupies 246 to 369; the sequence is YSLCIFRTNN…AGEELTFDYQ (124 aa). Residues 257-259, Tyr300, and 326-327 contribute to the S-adenosyl-L-methionine site; these read RGW and NH. Positions 329, 395, 397, and 402 each coordinate Zn(2+). The 17-residue stretch at 391-407 folds into the Post-SET domain; sequence IRTVCKCGAVCCRGYLN.

This sequence belongs to the class V-like SAM-binding methyltransferase superfamily. Histone-lysine methyltransferase family. Suvar3-9 subfamily.

Its subcellular location is the nucleus. The protein localises to the chromosome. The protein resides in the centromere. It catalyses the reaction L-lysyl(9)-[histone H3] + 3 S-adenosyl-L-methionine = N(6),N(6),N(6)-trimethyl-L-lysyl(9)-[histone H3] + 3 S-adenosyl-L-homocysteine + 3 H(+). Its function is as follows. Histone methyltransferase that specifically trimethylates 'Lys-9' of histone H3 using monomethylated H3 'Lys-9' as substrate. H3 'Lys-9' trimethylation represents a specific tag for epigenetic transcriptional repression by recruiting HP1 (CBX1, CBX3 and/or CBX5) proteins to methylated histones. Mainly functions in heterochromatin regions, thereby playing a central role in the establishment of constitutive heterochromatin at pericentric and telomere regions. H3 'Lys-9' trimethylation is also required to direct DNA methylation at pericentric repeats. SUV39H1 is targeted to histone H3 via its interaction with RB1 and is involved in many processes. In Gallus gallus (Chicken), this protein is Histone-lysine N-methyltransferase SUV39H2 (SUV39H2).